Reading from the N-terminus, the 584-residue chain is Aspartate--tRNA(Asp/Asn) ligase (584 aa).

Residue E177 coordinates L-aspartate. The interval 201 to 204 (QLFK) is aspartate. Position 223 (R223) interacts with L-aspartate. ATP is bound by residues 223 to 225 (RDE) and Q232. H447 is a binding site for L-aspartate. E481 contacts ATP. Residue R488 participates in L-aspartate binding. 533–536 (GLDR) contributes to the ATP binding site.

The protein belongs to the class-II aminoacyl-tRNA synthetase family. Type 1 subfamily. Homodimer.

It localises to the cytoplasm. The enzyme catalyses tRNA(Asx) + L-aspartate + ATP = L-aspartyl-tRNA(Asx) + AMP + diphosphate. In terms of biological role, aspartyl-tRNA synthetase with relaxed tRNA specificity since it is able to aspartylate not only its cognate tRNA(Asp) but also tRNA(Asn). Reaction proceeds in two steps: L-aspartate is first activated by ATP to form Asp-AMP and then transferred to the acceptor end of tRNA(Asp/Asn). In Chlamydia caviae (strain ATCC VR-813 / DSM 19441 / 03DC25 / GPIC) (Chlamydophila caviae), this protein is Aspartate--tRNA(Asp/Asn) ligase.